The chain runs to 181 residues: Adenylate kinase (181 aa).

10 to 15 contributes to the ATP binding site; it reads GAGKGT. The interval 30–59 is NMP; it reads STGELFRSNIENGTKLGLEAKRYLDAGDLV. AMP-binding positions include threonine 31, arginine 36, 57–59, 85–88, and glutamine 92; these read DLV and GFPR. The interval 126–132 is LID; that stretch reads ARGRADD. Arginine 127 contributes to the ATP binding site. AMP-binding residues include arginine 129 and arginine 140. Glycine 166 is a binding site for ATP.

Belongs to the adenylate kinase family. As to quaternary structure, monomer.

It localises to the cytoplasm. The enzyme catalyses AMP + ATP = 2 ADP. The protein operates within purine metabolism; AMP biosynthesis via salvage pathway; AMP from ADP: step 1/1. Catalyzes the reversible transfer of the terminal phosphate group between ATP and AMP. Plays an important role in cellular energy homeostasis and in adenine nucleotide metabolism. The protein is Adenylate kinase of Mycolicibacterium paratuberculosis (strain ATCC BAA-968 / K-10) (Mycobacterium paratuberculosis).